A 345-amino-acid polypeptide reads, in one-letter code: Calcium uniporter regulatory subunit MCUb, mitochondrial (345 aa).

The transit peptide at 1 to 44 (MPGALSGRRMLPSGLCLGRWQLLRTIRARGRGDPRELPSTPQVL) directs the protein to the mitochondrion. The stretch at 188–221 (EIQKRRERHLMAKIDHLQEQLRPLEQVKAAIEAR) forms a coiled coil. Helical transmembrane passes span 229 to 249 (LLWAGLALLSVQGGALAWLTW) and 259 to 279 (PVTFFLSFANSIVFFAYFIIT). Residues 306-334 (FDVEQYNKLKEDLAEATESLESVRRSLRL) adopt a coiled-coil conformation.

It belongs to the MCU (TC 1.A.77) family. Homooligomer. Associates with the uniplex complex, composed of MCU, MICU1, MICU2 and EMRE/SMDT1, inhibiting its activity. As to expression, detected in lung, brain and heart, and at lower levels in white fat, skeletal muscle and spleen. Detected at very low levels in kidney and liver. Highly expressed in macrophages during the progression of skeletal muscle regeneration.

The protein resides in the mitochondrion inner membrane. Its function is as follows. Negative regulator of the mitochondrial calcium uniporter (MCU), a channel that mediates calcium uptake into the mitochondrial matrix. MCUB is required to limit mitochondrial calcium overload during stress. Acts as a dominant-negative regulator that displaces MCU from the functional uniplex complex and thereby decreases the association of calcium sensors MICU1 and MICU2, preventing channel gating. Mitochondrial calcium homeostasis plays key roles in mitochondrial metabolism. Acts as an important regulator of mitochondrial metabolism in response to stress in muscle cells: induced in response to fasting, leading to restrict mitochondrial calcium uptake, resulting in reprogramming of mitochondria toward fatty acid oxidation preference. Acts as a regulator of macrophage polarization during skeletal muscle regeneration: inhibition of mitochondrial calcium uptake drives differentiation of macrophages with anti-inflammatory profile, promoting the differentiation and fusion of satellite cells. This Mus musculus (Mouse) protein is Calcium uniporter regulatory subunit MCUb, mitochondrial.